A 235-amino-acid chain; its full sequence is Ribonuclease PH (235 aa).

Phosphate-binding positions include Arg86 and 124–126 (GTR).

Belongs to the RNase PH family. In terms of assembly, homohexameric ring arranged as a trimer of dimers.

It carries out the reaction tRNA(n+1) + phosphate = tRNA(n) + a ribonucleoside 5'-diphosphate. In terms of biological role, phosphorolytic 3'-5' exoribonuclease that plays an important role in tRNA 3'-end maturation. Removes nucleotide residues following the 3'-CCA terminus of tRNAs; can also add nucleotides to the ends of RNA molecules by using nucleoside diphosphates as substrates, but this may not be physiologically important. Probably plays a role in initiation of 16S rRNA degradation (leading to ribosome degradation) during starvation. The chain is Ribonuclease PH from Francisella tularensis subsp. tularensis (strain FSC 198).